The sequence spans 437 residues: Amino-acid acetyltransferase (437 aa).

Residues 289–429 (ENIRLATSFD…EHYNYQRMSK (141 aa)) form the N-acetyltransferase domain.

The protein belongs to the acetyltransferase family. ArgA subfamily.

It is found in the cytoplasm. The enzyme catalyses L-glutamate + acetyl-CoA = N-acetyl-L-glutamate + CoA + H(+). Its pathway is amino-acid biosynthesis; L-arginine biosynthesis; N(2)-acetyl-L-ornithine from L-glutamate: step 1/4. The chain is Amino-acid acetyltransferase from Actinobacillus pleuropneumoniae serotype 7 (strain AP76).